We begin with the raw amino-acid sequence, 88 residues long: DNA-directed RNA polymerase subunit omega (88 aa).

The protein belongs to the RNA polymerase subunit omega family. The RNAP catalytic core consists of 2 alpha, 1 beta, 1 beta' and 1 omega subunit. When a sigma factor is associated with the core the holoenzyme is formed, which can initiate transcription.

It carries out the reaction RNA(n) + a ribonucleoside 5'-triphosphate = RNA(n+1) + diphosphate. Promotes RNA polymerase assembly. Latches the N- and C-terminal regions of the beta' subunit thereby facilitating its interaction with the beta and alpha subunits. The sequence is that of DNA-directed RNA polymerase subunit omega from Salinispora tropica (strain ATCC BAA-916 / DSM 44818 / JCM 13857 / NBRC 105044 / CNB-440).